We begin with the raw amino-acid sequence, 206 residues long: Bacterial microcompartment protein trimer-3 (206 aa).

2 consecutive BMC circularly permuted domains span residues E2–P104 and R105–G206. Positions E67 to R68 match the Pore gating residues motif.

It belongs to the EutL/PduB family. Homotrimerizes to form a pseudohexamer. These stack, with the concave faces together, with the concave faces together, in purified bacterial microcompartments (BMC).

Its subcellular location is the bacterial microcompartment. Its function is as follows. A minor component of the bacterial microcompartment (BMC) shell. Expression of 5 proteins in E.coli (BMC-H (Hoch_5815), BMC-P (Hoch_5814), and 3 BMC-T (Hoch_5812, Hoch_5816, Hoch_3341)) forms 40 nm artificial BMCs with a molecular mass of 6.5 MDa. One of 2 stacked pseudohexamers in the BMC. There are 20 BMC-T pseudohexamers per BMC, composed of mixed BMC-T1, BMC-T2 and BMC-T3. The shell facets are 20-30 Angstroms thick, with 1 of the stacked BMC-T trimers protruding to the exterior. The stacked trimers may serve as conduits to allow metabolite flux across the protein shell, gated by Arg-68 which contacts Glu-67 in an adjacent subunit; they are flexible enough to play a role in accommodating variations in shell assembly. This is Bacterial microcompartment protein trimer-3 from Haliangium ochraceum (strain DSM 14365 / JCM 11303 / SMP-2).